The following is a 279-amino-acid chain: Tryptophan synthase alpha chain (279 aa).

Residues E50 and D61 each act as proton acceptor in the active site.

The protein belongs to the TrpA family. As to quaternary structure, tetramer of two alpha and two beta chains.

The catalysed reaction is (1S,2R)-1-C-(indol-3-yl)glycerol 3-phosphate + L-serine = D-glyceraldehyde 3-phosphate + L-tryptophan + H2O. Its pathway is amino-acid biosynthesis; L-tryptophan biosynthesis; L-tryptophan from chorismate: step 5/5. Functionally, the alpha subunit is responsible for the aldol cleavage of indoleglycerol phosphate to indole and glyceraldehyde 3-phosphate. This chain is Tryptophan synthase alpha chain, found in Brucella melitensis biotype 1 (strain ATCC 23456 / CCUG 17765 / NCTC 10094 / 16M).